Reading from the N-terminus, the 304-residue chain is Oxygen-dependent coproporphyrinogen-III oxidase (304 aa).

Residue serine 93 coordinates substrate. A divalent metal cation contacts are provided by histidine 97 and histidine 107. The active-site Proton donor is the histidine 107. Residue 109 to 111 (NVR) coordinates substrate. Residues histidine 146 and histidine 176 each contribute to the a divalent metal cation site. Residues 241–276 (YVEFNLVYDRGTLFGLQSGGRTESILMSLPPQVRWG) are important for dimerization. A substrate-binding site is contributed by 259-261 (GGR).

It belongs to the aerobic coproporphyrinogen-III oxidase family. As to quaternary structure, homodimer. The cofactor is a divalent metal cation.

Its subcellular location is the cytoplasm. The enzyme catalyses coproporphyrinogen III + O2 + 2 H(+) = protoporphyrinogen IX + 2 CO2 + 2 H2O. It functions in the pathway porphyrin-containing compound metabolism; protoporphyrin-IX biosynthesis; protoporphyrinogen-IX from coproporphyrinogen-III (O2 route): step 1/1. Its function is as follows. Involved in the heme biosynthesis. Catalyzes the aerobic oxidative decarboxylation of propionate groups of rings A and B of coproporphyrinogen-III to yield the vinyl groups in protoporphyrinogen-IX. This chain is Oxygen-dependent coproporphyrinogen-III oxidase, found in Pseudomonas savastanoi pv. phaseolicola (strain 1448A / Race 6) (Pseudomonas syringae pv. phaseolicola (strain 1448A / Race 6)).